We begin with the raw amino-acid sequence, 89 residues long: Small ribosomal subunit protein uS15 (89 aa).

Belongs to the universal ribosomal protein uS15 family. As to quaternary structure, part of the 30S ribosomal subunit. Forms a bridge to the 50S subunit in the 70S ribosome, contacting the 23S rRNA.

One of the primary rRNA binding proteins, it binds directly to 16S rRNA where it helps nucleate assembly of the platform of the 30S subunit by binding and bridging several RNA helices of the 16S rRNA. In terms of biological role, forms an intersubunit bridge (bridge B4) with the 23S rRNA of the 50S subunit in the ribosome. The polypeptide is Small ribosomal subunit protein uS15 (Cereibacter sphaeroides (strain ATCC 17023 / DSM 158 / JCM 6121 / CCUG 31486 / LMG 2827 / NBRC 12203 / NCIMB 8253 / ATH 2.4.1.) (Rhodobacter sphaeroides)).